The chain runs to 479 residues: Glutamate--tRNA ligase (479 aa).

The short motif at Pro9–Thr19 is the 'HIGH' region element. A 'KMSKS' region motif is present at residues Lys243–Arg247. Lys246 serves as a coordination point for ATP.

This sequence belongs to the class-I aminoacyl-tRNA synthetase family. Glutamate--tRNA ligase type 1 subfamily. In terms of assembly, monomer.

It localises to the cytoplasm. The enzyme catalyses tRNA(Glu) + L-glutamate + ATP = L-glutamyl-tRNA(Glu) + AMP + diphosphate. Catalyzes the attachment of glutamate to tRNA(Glu) in a two-step reaction: glutamate is first activated by ATP to form Glu-AMP and then transferred to the acceptor end of tRNA(Glu). This chain is Glutamate--tRNA ligase, found in Synechococcus sp. (strain JA-2-3B'a(2-13)) (Cyanobacteria bacterium Yellowstone B-Prime).